Reading from the N-terminus, the 507-residue chain is ATP synthase subunit beta (507 aa).

The interval 1–22 is disordered; that stretch reads MSGLASKAKSRVKSSKGKNSTN. 183–190 lines the ATP pocket; it reads GGAGVGKT.

Belongs to the ATPase alpha/beta chains family. In terms of assembly, F-type ATPases have 2 components, CF(1) - the catalytic core - and CF(0) - the membrane proton channel. CF(1) has five subunits: alpha(3), beta(3), gamma(1), delta(1), epsilon(1). CF(0) has three main subunits: a(1), b(2) and c(9-12). The alpha and beta chains form an alternating ring which encloses part of the gamma chain. CF(1) is attached to CF(0) by a central stalk formed by the gamma and epsilon chains, while a peripheral stalk is formed by the delta and b chains.

The protein localises to the cell inner membrane. The enzyme catalyses ATP + H2O + 4 H(+)(in) = ADP + phosphate + 5 H(+)(out). Produces ATP from ADP in the presence of a proton gradient across the membrane. The catalytic sites are hosted primarily by the beta subunits. The protein is ATP synthase subunit beta of Ehrlichia chaffeensis (strain ATCC CRL-10679 / Arkansas).